Here is a 286-residue protein sequence, read N- to C-terminus: Shikimate dehydrogenase (NADP(+)) (286 aa).

Shikimate contacts are provided by residues 22–24 and Thr69; that span reads SFS. The Proton acceptor role is filled by Lys73. Glu85 provides a ligand contact to NADP(+). Residues Asn94 and Asp109 each coordinate shikimate. Residues 133-137, 157-162, and Leu231 each bind NADP(+); these read GAGGA and NRTIDK. Tyr233 serves as a coordination point for shikimate. Gly254 is a binding site for NADP(+).

The protein belongs to the shikimate dehydrogenase family. Homodimer.

The enzyme catalyses shikimate + NADP(+) = 3-dehydroshikimate + NADPH + H(+). It functions in the pathway metabolic intermediate biosynthesis; chorismate biosynthesis; chorismate from D-erythrose 4-phosphate and phosphoenolpyruvate: step 4/7. Functionally, involved in the biosynthesis of the chorismate, which leads to the biosynthesis of aromatic amino acids. Catalyzes the reversible NADPH linked reduction of 3-dehydroshikimate (DHSA) to yield shikimate (SA). The polypeptide is Shikimate dehydrogenase (NADP(+)) (Alkaliphilus oremlandii (strain OhILAs) (Clostridium oremlandii (strain OhILAs))).